Reading from the N-terminus, the 366-residue chain is Erythronate-4-phosphate dehydrogenase (366 aa).

The substrate site is built by serine 46 and threonine 67. Aspartate 147 and threonine 175 together coordinate NAD(+). Arginine 208 is an active-site residue. An NAD(+)-binding site is contributed by aspartate 228. Residue glutamate 233 is part of the active site. The active-site Proton donor is the histidine 250. Residue glycine 253 participates in NAD(+) binding. Tyrosine 254 serves as a coordination point for substrate.

It belongs to the D-isomer specific 2-hydroxyacid dehydrogenase family. PdxB subfamily. Homodimer.

The protein localises to the cytoplasm. The enzyme catalyses 4-phospho-D-erythronate + NAD(+) = (R)-3-hydroxy-2-oxo-4-phosphooxybutanoate + NADH + H(+). It functions in the pathway cofactor biosynthesis; pyridoxine 5'-phosphate biosynthesis; pyridoxine 5'-phosphate from D-erythrose 4-phosphate: step 2/5. Catalyzes the oxidation of erythronate-4-phosphate to 3-hydroxy-2-oxo-4-phosphonooxybutanoate. This chain is Erythronate-4-phosphate dehydrogenase, found in Coxiella burnetii (strain RSA 331 / Henzerling II).